Reading from the N-terminus, the 157-residue chain is Cell cycle regulator of non-homologous end joining (157 aa).

An N-acetylmethionine modification is found at M1. The KBM signature appears at M1 to V21. Over residues K80–D91 the composition is skewed to basic and acidic residues. A disordered region spans residues K80–L148. Positions S96–S106 are enriched in low complexity. Residues A147 to S157 carry the XLM motif.

In terms of assembly, interacts (via KBM motif) with XRCC5/Ku80 and XRCC6/Ku70 heterodimer. Interacts (via XLF motif) with TRIM28/KAP1, ATM, MRE11, NBN and RAD50. Interacts with splicing factor SF3B1. Interacts with ERCC6L2; this interaction is DNA independent.

The protein resides in the cytoplasm. Its subcellular location is the nucleus. It is found in the chromosome. Cell-cycle-specific regulator of classical non-homologous end joining (NHEJ) of DNA double-strand break (DSB) repair, which can act both as an activator or inhibitor of NHEJ, depending on the cell cycle phase. Acts as a regulator of DNA repair pathway choice by specifically inhibiting classical NHEJ during the S and G2 phases, thereby promoting error-free repair by homologous recombination during cell cycle phases when sister chromatids are present. Preferentially protects single-stranded overhangs at break sites by inhibiting classical NHEJ, thereby creating a local environment that favors homologous recombination. Acts via interaction with XRCC5/Ku80 and XRCC6/Ku70. In contrast, acts as an activator of NHEJ during G1 phase of the cell cycle: promotes classical NHEJ in G1 phase cells via multivalent interactions that increase the affinity of DNA damage response proteins for DSB-associated chromatin. Also involved in immunoglobulin V(D)J recombination. May also act as an indirect regulator of proteasome. The chain is Cell cycle regulator of non-homologous end joining from Mus musculus (Mouse).